A 75-amino-acid chain; its full sequence is Guanine nucleotide-binding protein G(I)/G(S)/G(O) subunit gamma-4 (75 aa).

The residue at position 72 (Cys-72) is a Cysteine methyl ester. The S-geranylgeranyl cysteine moiety is linked to residue Cys-72. A propeptide spans 73-75 (TIL) (removed in mature form).

This sequence belongs to the G protein gamma family. In terms of assembly, g proteins are composed of 3 units, alpha, beta and gamma. Interacts with beta-1 and beta-2, but not with beta-3. Interacts with KCNK1. Interacts (via C-terminus) with KCNK2/TREK-1 (via N-terminus); this interaction confers ion selectivity to Cl(-) and L-glutamate. As to expression, brain, kidney, pancreas, skeletal muscle and faintly in cardiac muscle.

Its subcellular location is the cell membrane. Its function is as follows. Guanine nucleotide-binding proteins (G proteins) are involved as a modulator or transducer in various transmembrane signaling systems. The beta and gamma chains are required for the GTPase activity, for replacement of GDP by GTP, and for G protein-effector interaction. This Homo sapiens (Human) protein is Guanine nucleotide-binding protein G(I)/G(S)/G(O) subunit gamma-4 (GNG4).